A 657-amino-acid polypeptide reads, in one-letter code: WD repeat-containing protein 70 (657 aa).

Disordered regions lie at residues 1 to 21 (MEHSGTSEVTGADTAGPDPQL) and 43 to 172 (FEQT…PVQR). The span at 45–78 (QTRRTAVERSRKTLEAREKEEEMNREKELRKQIE) shows a compositional bias: basic and acidic residues. Positions 82-105 (PAPSSSSAARERSQSSCRDTSSSD) are enriched in low complexity. Acidic residues-rich tracts occupy residues 106-119 (SESDDSSDSSDDEL) and 150-168 (EEGEDDDDDELDDEGEEDN). WD repeat units lie at residues 183 to 222 (HGTKTVSALGLDPSGARLVTGGYDYDVKFWDFAGMDASFK), 230 to 271 (CECH…ECIK), 284 to 324 (GHTA…KQKS), 333 to 372 (GKKVIPTTCTYSRDGNLVAAACQNGSIQIWDRNLTVHPKF), 379 to 418 (DPGTDTSCVAFSYDGNVLASRGGDDTLKLWDVRQFNKPLF), 424 to 469 (PTLF…RVYE), and 472 to 511 (ITDASVVRCLWHPKLNQIMVGTGNGLAKVYYDPNKSQRGA). Lysine 299 participates in a covalent cross-link: Glycyl lysine isopeptide (Lys-Gly) (interchain with G-Cter in SUMO2). N6-acetyllysine is present on lysine 455. Over residues 543–568 (REPRQRSTRKQLEKDRLDPLKSHKPE) the composition is skewed to basic and acidic residues. Residues 543–584 (REPRQRSTRKQLEKDRLDPLKSHKPEPPVAGPGRGGRVGTHG) are disordered. Positions 574–584 (PGRGGRVGTHG) are enriched in gly residues. Threonine 582 is subject to Phosphothreonine. Residues lysine 593 and lysine 599 each participate in a glycyl lysine isopeptide (Lys-Gly) (interchain with G-Cter in SUMO2) cross-link. A phosphoserine mark is found at serine 624 and serine 641. The interval 634 to 657 (TMFAQVESDDEESKNEPEWKKRKI) is disordered. The span at 647 to 657 (KNEPEWKKRKI) shows a compositional bias: basic and acidic residues.

It belongs to the WD repeat GAD-1 family.

This Mus musculus (Mouse) protein is WD repeat-containing protein 70 (Wdr70).